Here is a 154-residue protein sequence, read N- to C-terminus: Ribonuclease H (154 aa).

The RNase H type-1 domain maps to Glu3–Val144. Residues Asp12, Glu50, Asp72, and Asp136 each coordinate Mg(2+).

The protein belongs to the RNase H family. Monomer. Mg(2+) serves as cofactor.

Its subcellular location is the cytoplasm. The enzyme catalyses Endonucleolytic cleavage to 5'-phosphomonoester.. Functionally, endonuclease that specifically degrades the RNA of RNA-DNA hybrids. The protein is Ribonuclease H of Bradyrhizobium diazoefficiens (strain JCM 10833 / BCRC 13528 / IAM 13628 / NBRC 14792 / USDA 110).